The following is a 137-amino-acid chain: Cytochrome b5 (137 aa).

Residues 6–82 (KKVYTLEEVA…MDEYYVGDID (77 aa)) enclose the Cytochrome b5 heme-binding domain. His-41 and His-65 together coordinate heme. Residues 108–128 (FIIKILQFLVPLAILGLAVAI) form a helical membrane-spanning segment.

The protein belongs to the cytochrome b5 family.

Its subcellular location is the endoplasmic reticulum membrane. The protein localises to the microsome membrane. Membrane bound hemoprotein which function as an electron carrier for several membrane bound oxygenases. This chain is Cytochrome b5, found in Oryza sativa subsp. japonica (Rice).